A 44-amino-acid polypeptide reads, in one-letter code: Cytochrome b559 subunit beta (44 aa).

The chain crosses the membrane as a helical span at residues Val-17–Phe-41. 2 residues coordinate heme: Arg-18 and His-23.

It belongs to the PsbE/PsbF family. As to quaternary structure, heterodimer of an alpha subunit and a beta subunit. PSII is composed of 1 copy each of membrane proteins PsbA, PsbB, PsbC, PsbD, PsbE, PsbF, PsbH, PsbI, PsbJ, PsbK, PsbL, PsbM, PsbT, PsbX, PsbY, PsbZ, Psb30/Ycf12, peripheral proteins PsbO, CyanoQ (PsbQ), PsbU, PsbV and a large number of cofactors. It forms dimeric complexes. Heme b serves as cofactor.

It is found in the cellular thylakoid membrane. Its function is as follows. This b-type cytochrome is tightly associated with the reaction center of photosystem II (PSII). PSII is a light-driven water:plastoquinone oxidoreductase that uses light energy to abstract electrons from H(2)O, generating O(2) and a proton gradient subsequently used for ATP formation. It consists of a core antenna complex that captures photons, and an electron transfer chain that converts photonic excitation into a charge separation. This chain is Cytochrome b559 subunit beta, found in Synechocystis sp. (strain ATCC 27184 / PCC 6803 / Kazusa).